A 627-amino-acid chain; its full sequence is MDLISVLPSASKSCVCLHKPLSSSTHKLKPFCKTIRILVMPRRWEFARPSMSLSTVASEDDIQRRTGGYLSNLWNDDVIQFLSTPYGELAYRERAERLIDEVRDIFSSMSLEDGEFSDLIQRLWMVDNVERLGIDRHFKNEIKSALDYVYSYWSEKGIGCGTKSIITNLNSTALGFRTLRLHGYPVSADVLKHFRNQIGQFVSCPSETEEDIRIMVNLYRASLIAFPVAFPGEKVMEEAESFSEKYLKETLQKIPDCSLSREIGDVLEHGWHTNLPRLEARNYIDVFGQDTKNMEPNRKTEKLLELAKLEFNIFQSIQKTELESLLRWWNDSGSPQITFTRHRHVEYYTLASCIAFEPQHSGFRLGFAKACHILTVLDDMYDLFGTVDELKLFTAAIKRWDPSATDCLPQYMKGIYMMVYNTVNEMSAEAQKAQGRDTLNYARQAWEDCLDSHMQEAKWIATGFLPTFEEYLENGKVSSAHRVSALQPMLTMDIPFPPHILKEVDFPSNLNDLACAMLRLRGDTRCYQADRARGEETSCISCYMKDNPGATEEDALNHLNVMISGVIKELNWELLKPNSSVPISSKKINFDITRAFHYGYKYRDGYSVSSVETKSLVMRTLLEPVPL.

The transit peptide at 1–52 directs the protein to the chloroplast; that stretch reads MDLISVLPSASKSCVCLHKPLSSSTHKLKPFCKTIRILVMPRRWEFARPSMS. D378, D382, and D530 together coordinate Mg(2+). The DDXXD motif motif lies at 378-382; the sequence is DDMYD.

This sequence belongs to the terpene synthase family. Tpsd subfamily. It depends on Mg(2+) as a cofactor. Mn(2+) is required as a cofactor.

It is found in the plastid. The protein localises to the chloroplast. The enzyme catalyses (2E)-geranyl diphosphate + H2O = (S)-alpha-terpineol + diphosphate. It functions in the pathway terpene metabolism; oleoresin biosynthesis. Its function is as follows. Involved in defensive oleoresin formation in conifers in response to insect attack or other injury. Involved in monoterpene (C10) olefins biosynthesis. Produces 57.3% alpha-terpineol (15.1% (+)/84.9% (-)), 27.6% limonene (25.2% (+)/74.8% (-)), 8% terpinolene, 4.7% beta-pinene (14.8% (+)/85.2% (-)), 1.3% alpha-pinene (100% (+)) and 1.1% myrcene. This Pinus taeda (Loblolly pine) protein is (-)-alpha-terpineol synthase, chloroplastic (PT10).